We begin with the raw amino-acid sequence, 323 residues long: Isoeugenol synthase 1 (323 aa).

NADP(+)-binding positions include 14 to 17 (TGYL), 36 to 47 (VMPLKKNSDDSK), 88 to 90 (VPQ), 113 to 115 (SEF), lysine 135, and 155 to 157 (NSL). Lysine 135 (proton donor/acceptor) is an active-site residue.

Belongs to the NmrA-type oxidoreductase family. Expressed in flowers, especially in corolla and tubes of petals, probably in both epidermal and mesophyll cell layers.

The catalysed reaction is (E)-isoeugenol + acetate + NADP(+) = (E)-coniferyl acetate + NADPH. The protein operates within aromatic compound metabolism; phenylpropanoid biosynthesis. Inhibited by zinc and copper ions. Repressed by 4-bromo-cinnamyl acetate. Its function is as follows. Involved in the biosynthesis of the floral volatile isoeugenol. Catalyzes the synthesis of the phenylpropene isoeugenol from coniferyl acetate. Phenylpropenes are the primary constituents of various essential plant oils. They are produced as antimicrobial and antianimal compounds, or as floral attractants of pollinators. Isoeugenol is a characteristic aromatic constituent of spices and a floral volatile compound. The protein is Isoeugenol synthase 1 of Petunia hybrida (Petunia).